The sequence spans 404 residues: Argininosuccinate synthase (404 aa).

ATP is bound by residues 10–18 (AYSGGLDTS) and alanine 37. The L-citrulline site is built by tyrosine 90 and serine 95. An ATP-binding site is contributed by glycine 120. Residues threonine 122, asparagine 126, and aspartate 127 each coordinate L-aspartate. Position 126 (asparagine 126) interacts with L-citrulline. L-citrulline contacts are provided by arginine 130, serine 181, serine 190, glutamate 266, and tyrosine 278. A disordered region spans residues 173-200 (DKRGESPFSTDANLLHTSSEGKVLEDPW). Residues 179 to 192 (PFSTDANLLHTSSE) are compositionally biased toward polar residues.

It belongs to the argininosuccinate synthase family. Type 1 subfamily. As to quaternary structure, homotetramer.

It localises to the cytoplasm. The catalysed reaction is L-citrulline + L-aspartate + ATP = 2-(N(omega)-L-arginino)succinate + AMP + diphosphate + H(+). It functions in the pathway amino-acid biosynthesis; L-arginine biosynthesis; L-arginine from L-ornithine and carbamoyl phosphate: step 2/3. In Novosphingobium aromaticivorans (strain ATCC 700278 / DSM 12444 / CCUG 56034 / CIP 105152 / NBRC 16084 / F199), this protein is Argininosuccinate synthase.